A 273-amino-acid polypeptide reads, in one-letter code: Large ribosomal subunit protein uL2 (273 aa).

Positions 224–264 are disordered; the sequence is AMNPVDHPHGGGEGRNFGKHPVTPWGIQTKGKKTRKNKRTD. The span at 253–264 shows a compositional bias: basic residues; it reads KGKKTRKNKRTD.

The protein belongs to the universal ribosomal protein uL2 family. As to quaternary structure, part of the 50S ribosomal subunit. Forms a bridge to the 30S subunit in the 70S ribosome.

In terms of biological role, one of the primary rRNA binding proteins. Required for association of the 30S and 50S subunits to form the 70S ribosome, for tRNA binding and peptide bond formation. It has been suggested to have peptidyltransferase activity; this is somewhat controversial. Makes several contacts with the 16S rRNA in the 70S ribosome. This is Large ribosomal subunit protein uL2 from Buchnera aphidicola subsp. Acyrthosiphon pisum (strain 5A).